Reading from the N-terminus, the 415-residue chain is Probable N-acetyl-gamma-glutamyl-phosphate reductase, chloroplastic (415 aa).

The transit peptide at 1 to 74 (MGSTALGGGA…SGVKSGEEVR (74 aa)) directs the protein to the chloroplast. The disordered stretch occupies residues 48-68 (VRASVASSPQKQHSPKTSGVK). Polar residues predominate over residues 56-67 (PQKQHSPKTSGV). Cysteine 219 is a catalytic residue.

Belongs to the NAGSA dehydrogenase family. Type 1 subfamily. Homotetramer.

It localises to the plastid. Its subcellular location is the chloroplast. It catalyses the reaction N-acetyl-L-glutamate 5-semialdehyde + phosphate + NADP(+) = N-acetyl-L-glutamyl 5-phosphate + NADPH + H(+). It participates in amino-acid biosynthesis; L-arginine biosynthesis; N(2)-acetyl-L-ornithine from L-glutamate: step 3/4. This is Probable N-acetyl-gamma-glutamyl-phosphate reductase, chloroplastic from Oryza sativa subsp. japonica (Rice).